The primary structure comprises 520 residues: Cytochrome P450 1A1 (520 aa).

Phenylalanine 230 is a substrate binding site. Cysteine 464 contributes to the heme binding site.

It belongs to the cytochrome P450 family. It depends on heme as a cofactor.

It is found in the endoplasmic reticulum membrane. Its subcellular location is the microsome membrane. The enzyme catalyses an organic molecule + reduced [NADPH--hemoprotein reductase] + O2 = an alcohol + oxidized [NADPH--hemoprotein reductase] + H2O + H(+). In terms of biological role, cytochromes P450 are a group of heme-thiolate monooxygenases. In liver microsomes, this enzyme is involved in an NADPH-dependent electron transport pathway. It oxidizes a variety of structurally unrelated compounds, including steroids, fatty acids, and xenobiotics. This is Cytochrome P450 1A1 (cyp1a1) from Dicentrarchus labrax (European seabass).